The primary structure comprises 393 residues: Acetate kinase (393 aa).

Asn-7 is a binding site for Mg(2+). Lys-14 contributes to the ATP binding site. Arg-89 is a binding site for substrate. Catalysis depends on Asp-146, which acts as the Proton donor/acceptor. ATP is bound by residues 204-208, 279-281, and 327-331; these read HIGNG, DSR, and GIGEN. Position 379 (Glu-379) interacts with Mg(2+).

It belongs to the acetokinase family. In terms of assembly, homodimer. Mg(2+) is required as a cofactor. Mn(2+) serves as cofactor.

It is found in the cytoplasm. It carries out the reaction acetate + ATP = acetyl phosphate + ADP. Its pathway is metabolic intermediate biosynthesis; acetyl-CoA biosynthesis; acetyl-CoA from acetate: step 1/2. In terms of biological role, catalyzes the formation of acetyl phosphate from acetate and ATP. Can also catalyze the reverse reaction. The polypeptide is Acetate kinase (Acholeplasma laidlawii (strain PG-8A)).